A 363-amino-acid chain; its full sequence is Flagellar P-ring protein (363 aa).

Residues 1 to 20 (MKKLTLVLFGMLFLASSAHA) form the signal peptide.

It belongs to the FlgI family. As to quaternary structure, the basal body constitutes a major portion of the flagellar organelle and consists of four rings (L,P,S, and M) mounted on a central rod.

It is found in the periplasm. The protein resides in the bacterial flagellum basal body. Its function is as follows. Assembles around the rod to form the L-ring and probably protects the motor/basal body from shearing forces during rotation. The polypeptide is Flagellar P-ring protein (Vibrio atlanticus (strain LGP32) (Vibrio splendidus (strain Mel32))).